Here is a 573-residue protein sequence, read N- to C-terminus: MPDYEGNGEDIDNYTGGSSPPPKSRSSHGHGPTPDDYSDSKSQHSSRENEKDRDSSRSREKDRERGRDKDRDRDRDRDRGRDRDRGRDRDKDREREKDRDRHHGDRHRDRSDRREKERTRDRDDDDRHRTRDYDQQREHAKDRESRHRHRSRSRGRSEHRSRSRSRSRSKSKRISGFDMAPPTSAMLPGITAAAGQVPGTNPPIPGMFPNMFPLASGQFGALPVMPIQAMTQQATRHARRVYVGGLPAHANEQSVATFFSHVMSAIGGNTAGPGDAVVNVYINYEKKFAFVEMRSVEEASNAMALDGIIFEGAPCKVRRPSDYNPSLAATLGPSQPNPNLNLAAVGLSPGSAGGLEGPDRIFVGGLPYYFTEAQIRELLESFGPLRGFDLVKDRETGNSKGYAFCVYQDVSVTDIACAALNGIKMGDKTLTVRRANQGTTQPKPEQESVLLHAQQQIALQRLMLQPATLATKVLSLTEVISADELNDDEDYQDILEDMRTECGKFGSLVNVVIPRPSPNGEPTPGVGKVFLEYADVDSSSKARQSLNGRKFGGNQVVAVFYPENKFYEGDYDG.

Residues 1-12 (MPDYEGNGEDID) show a composition bias toward acidic residues. The interval 1-187 (MPDYEGNGED…DMAPPTSAML (187 aa)) is disordered. A compositionally biased stretch (basic and acidic residues) spans 38-145 (SDSKSQHSSR…QREHAKDRES (108 aa)). Positions 161-173 (SRSRSRSRSKSKR) are enriched in basic residues. RRM domains follow at residues 239 to 322 (RRVY…RPSD), 359 to 437 (DRIF…RANQ), and 478 to 564 (EVIS…YPEN).

The protein belongs to the splicing factor SR family. Expressed in stems, leaves and apical buds.

It localises to the nucleus. Functionally, necessary for the splicing of pre-mRNA. Binds to the U -enriched regions of plant introns. The sequence is that of Splicing factor U2af large subunit B (U2AF65B) from Nicotiana plumbaginifolia (Leadwort-leaved tobacco).